We begin with the raw amino-acid sequence, 289 residues long: Serine/threonine-protein phosphatase Pgam5, mitochondrial (289 aa).

This sequence belongs to the phosphoglycerate mutase family. BPG-dependent PGAM subfamily. Interacts with Pk92B/ASK1.

It is found in the mitochondrion outer membrane. The catalysed reaction is O-phospho-L-seryl-[protein] + H2O = L-seryl-[protein] + phosphate. It catalyses the reaction O-phospho-L-threonyl-[protein] + H2O = L-threonyl-[protein] + phosphate. Functionally, displays phosphatase activity for serine/threonine residues, and dephosphorylates and activates Pk92B kinase. Has apparently no phosphoglycerate mutase activity. The sequence is that of Serine/threonine-protein phosphatase Pgam5, mitochondrial from Drosophila grimshawi (Hawaiian fruit fly).